We begin with the raw amino-acid sequence, 72 residues long: Translation initiation factor IF-1 (72 aa).

The S1-like domain occupies 1–72 (MAKEDVIEFS…TKGRITFRYK (72 aa)).

This sequence belongs to the IF-1 family. In terms of assembly, component of the 30S ribosomal translation pre-initiation complex which assembles on the 30S ribosome in the order IF-2 and IF-3, IF-1 and N-formylmethionyl-tRNA(fMet); mRNA recruitment can occur at any time during PIC assembly.

It localises to the cytoplasm. One of the essential components for the initiation of protein synthesis. Stabilizes the binding of IF-2 and IF-3 on the 30S subunit to which N-formylmethionyl-tRNA(fMet) subsequently binds. Helps modulate mRNA selection, yielding the 30S pre-initiation complex (PIC). Upon addition of the 50S ribosomal subunit IF-1, IF-2 and IF-3 are released leaving the mature 70S translation initiation complex. The polypeptide is Translation initiation factor IF-1 (Paramagnetospirillum magneticum (strain ATCC 700264 / AMB-1) (Magnetospirillum magneticum)).